We begin with the raw amino-acid sequence, 545 residues long: CTP synthase (545 aa).

Positions methionine 1–leucine 266 are amidoligase domain. Serine 14 provides a ligand contact to CTP. UTP is bound at residue serine 14. ATP is bound by residues serine 15–isoleucine 20 and aspartate 72. Mg(2+) contacts are provided by aspartate 72 and glutamate 140. CTP is bound by residues aspartate 147–glutamate 149, lysine 187–glutamine 192, and lysine 223. Residues lysine 187 to glutamine 192 and lysine 223 contribute to the UTP site. Lysine 239 to valine 241 is an ATP binding site. Residues serine 291–aspartate 542 enclose the Glutamine amidotransferase type-1 domain. Glycine 352 provides a ligand contact to L-glutamine. The active-site Nucleophile; for glutamine hydrolysis is cysteine 379. Residues leucine 380–glutamine 383, glutamate 403, and arginine 470 each bind L-glutamine. Residues histidine 515 and glutamate 517 contribute to the active site.

The protein belongs to the CTP synthase family. As to quaternary structure, homotetramer.

It carries out the reaction UTP + L-glutamine + ATP + H2O = CTP + L-glutamate + ADP + phosphate + 2 H(+). It catalyses the reaction L-glutamine + H2O = L-glutamate + NH4(+). The enzyme catalyses UTP + NH4(+) + ATP = CTP + ADP + phosphate + 2 H(+). The protein operates within pyrimidine metabolism; CTP biosynthesis via de novo pathway; CTP from UDP: step 2/2. Allosterically activated by GTP, when glutamine is the substrate; GTP has no effect on the reaction when ammonia is the substrate. The allosteric effector GTP functions by stabilizing the protein conformation that binds the tetrahedral intermediate(s) formed during glutamine hydrolysis. Inhibited by the product CTP, via allosteric rather than competitive inhibition. In terms of biological role, catalyzes the ATP-dependent amination of UTP to CTP with either L-glutamine or ammonia as the source of nitrogen. Regulates intracellular CTP levels through interactions with the four ribonucleotide triphosphates. The chain is CTP synthase from Hamiltonella defensa subsp. Acyrthosiphon pisum (strain 5AT).